The primary structure comprises 391 residues: 3-ketoacyl-CoA thiolase (391 aa).

Cys-95 (acyl-thioester intermediate) is an active-site residue. Catalysis depends on proton acceptor residues His-347 and Cys-377.

It belongs to the thiolase-like superfamily. Thiolase family. As to quaternary structure, heterotetramer of two alpha chains (FadB) and two beta chains (FadA).

Its subcellular location is the cytoplasm. It carries out the reaction an acyl-CoA + acetyl-CoA = a 3-oxoacyl-CoA + CoA. Its pathway is lipid metabolism; fatty acid beta-oxidation. Its function is as follows. Catalyzes the final step of fatty acid oxidation in which acetyl-CoA is released and the CoA ester of a fatty acid two carbons shorter is formed. The protein is 3-ketoacyl-CoA thiolase of Pseudomonas fluorescens (strain Pf0-1).